The primary structure comprises 428 residues: Cell division protein FtsZ (428 aa).

Residues 73–77, 160–162, Glu191, Arg195, and Asp239 each bind GTP; these read GGGGN and GTG. Residues 378–428 are disordered; sequence NAANARVVSAPPKRTPTQTPLTNSPAPTPEPKEKSGLDIPDFLQRRRPPKN. A compositionally biased stretch (polar residues) spans 392–402; it reads TPTQTPLTNSP.

This sequence belongs to the FtsZ family. Homodimer. Polymerizes to form a dynamic ring structure in a strictly GTP-dependent manner. Interacts directly with several other division proteins.

The protein resides in the cytoplasm. Essential cell division protein that forms a contractile ring structure (Z ring) at the future cell division site. The regulation of the ring assembly controls the timing and the location of cell division. One of the functions of the FtsZ ring is to recruit other cell division proteins to the septum to produce a new cell wall between the dividing cells. Binds GTP and shows GTPase activity. The polypeptide is Cell division protein FtsZ (Nostoc sp. (strain PCC 7120 / SAG 25.82 / UTEX 2576)).